Here is a 304-residue protein sequence, read N- to C-terminus: N-acetylmuramic acid 6-phosphate etherase (304 aa).

Positions 62-225 constitute an SIS domain; sequence IVEAFQQGGR…TTASMILIGK (164 aa). E90 acts as the Proton donor in catalysis. E121 is a catalytic residue.

Belongs to the GCKR-like family. MurNAc-6-P etherase subfamily. Homodimer.

The catalysed reaction is N-acetyl-D-muramate 6-phosphate + H2O = N-acetyl-D-glucosamine 6-phosphate + (R)-lactate. It participates in amino-sugar metabolism; 1,6-anhydro-N-acetylmuramate degradation. It functions in the pathway amino-sugar metabolism; N-acetylmuramate degradation. Its pathway is cell wall biogenesis; peptidoglycan recycling. Its function is as follows. Specifically catalyzes the cleavage of the D-lactyl ether substituent of MurNAc 6-phosphate, producing GlcNAc 6-phosphate and D-lactate. Together with AnmK, is also required for the utilization of anhydro-N-acetylmuramic acid (anhMurNAc) either imported from the medium or derived from its own cell wall murein, and thus plays a role in cell wall recycling. The protein is N-acetylmuramic acid 6-phosphate etherase of Glaesserella parasuis serovar 5 (strain SH0165) (Haemophilus parasuis).